The primary structure comprises 75 residues: Serine rich endogenous peptide 20 (75 aa).

Residues 1-25 form the signal peptide; that stretch reads MYKLTLCILTLSFLLLSGLSNTVLA. The SCOOP motif signature appears at 52 to 66; sequence KIGASGSNSGRAPSC. The tract at residues 54 to 75 is disordered; sequence GASGSNSGRAPSCNNSCKPNRP. A SxS motif essential for MIK2 binding motif is present at residues 56–58; that stretch reads SGS. The span at 56–75 shows a compositional bias: polar residues; it reads SGSNSGRAPSCNNSCKPNRP.

Belongs to the serine rich endogenous peptide (SCOOP) phytocytokine family. In terms of assembly, interacts with MIK2 (via extracellular leucine-rich repeat domain); this interaction triggers the formation of complex between MIK2 and the BAK1/SERK3 and SERK4 coreceptors, and subsequent BAK1 activation by phosphorylation. Mostly expressed in roots.

It localises to the cell membrane. The protein resides in the secreted. Its subcellular location is the extracellular space. It is found in the apoplast. In terms of biological role, brassicaceae-specific phytocytokine (plant endogenous peptide released into the apoplast) perceived by MIK2 in a BAK1/SERK3 and SERK4 coreceptors-dependent manner, that modulates various physiological and antimicrobial processes including growth prevention and reactive oxygen species (ROS) response regulation. Inhibits root growth. The protein is Serine rich endogenous peptide 20 of Arabidopsis thaliana (Mouse-ear cress).